We begin with the raw amino-acid sequence, 536 residues long: Apolipoprotein N-acyltransferase (536 aa).

6 helical membrane-spanning segments follow: residues 34–54 (PLWW…RPGA), 64–84 (ALIG…WLFI), 89–109 (YGAL…AFLA), 129–149 (GAAL…GSLW), 172–192 (YVGV…CVQW), and 199–219 (HWPM…AAVQ). One can recognise a CN hydrolase domain in the interval 244-487 (LQGNIAQDEK…RGVLRGQVHG (244 aa)). The Proton acceptor role is filled by glutamate 283. Lysine 345 is a catalytic residue. The Nucleophile role is filled by cysteine 395. A helical transmembrane segment spans residues 503–523 (WWVARWGLWPLWALAALALAW).

It belongs to the CN hydrolase family. Apolipoprotein N-acyltransferase subfamily.

The protein localises to the cell inner membrane. The catalysed reaction is N-terminal S-1,2-diacyl-sn-glyceryl-L-cysteinyl-[lipoprotein] + a glycerophospholipid = N-acyl-S-1,2-diacyl-sn-glyceryl-L-cysteinyl-[lipoprotein] + a 2-acyl-sn-glycero-3-phospholipid + H(+). It participates in protein modification; lipoprotein biosynthesis (N-acyl transfer). Functionally, catalyzes the phospholipid dependent N-acylation of the N-terminal cysteine of apolipoprotein, the last step in lipoprotein maturation. The protein is Apolipoprotein N-acyltransferase of Verminephrobacter eiseniae (strain EF01-2).